A 115-amino-acid chain; its full sequence is MNPLIQSLTEGQLRTDIPSFRPGDTVRVHAKVVEGTRERIQIFEGVVISRKGQGISEMYTVRKISSGIGVERTFPIHTPRVDKIEVVRYGKVRRAKLYYLRALQGKAARIKEIRK.

This sequence belongs to the bacterial ribosomal protein bL19 family.

Functionally, this protein is located at the 30S-50S ribosomal subunit interface and may play a role in the structure and function of the aminoacyl-tRNA binding site. This chain is Large ribosomal subunit protein bL19, found in Streptococcus thermophilus (strain CNRZ 1066).